The sequence spans 338 residues: UDP-3-O-acylglucosamine N-acyltransferase (338 aa).

Residue His-243 is the Proton acceptor of the active site.

Belongs to the transferase hexapeptide repeat family. LpxD subfamily. Homotrimer.

It carries out the reaction a UDP-3-O-[(3R)-3-hydroxyacyl]-alpha-D-glucosamine + a (3R)-hydroxyacyl-[ACP] = a UDP-2-N,3-O-bis[(3R)-3-hydroxyacyl]-alpha-D-glucosamine + holo-[ACP] + H(+). The protein operates within bacterial outer membrane biogenesis; LPS lipid A biosynthesis. In terms of biological role, catalyzes the N-acylation of UDP-3-O-acylglucosamine using 3-hydroxyacyl-ACP as the acyl donor. Is involved in the biosynthesis of lipid A, a phosphorylated glycolipid that anchors the lipopolysaccharide to the outer membrane of the cell. This Amoebophilus asiaticus (strain 5a2) protein is UDP-3-O-acylglucosamine N-acyltransferase.